A 168-amino-acid polypeptide reads, in one-letter code: G/U mismatch-specific DNA glycosylase (168 aa).

Belongs to the uracil-DNA glycosylase (UDG) superfamily. TDG/mug family. Binds DNA as a monomer.

The protein localises to the cytoplasm. The enzyme catalyses Specifically hydrolyzes mismatched double-stranded DNA and polynucleotides, releasing free uracil.. Its function is as follows. Excises ethenocytosine and uracil, which can arise by alkylation or deamination of cytosine, respectively, from the corresponding mispairs with guanine in ds-DNA. It is capable of hydrolyzing the carbon-nitrogen bond between the sugar-phosphate backbone of the DNA and the mispaired base. The complementary strand guanine functions in substrate recognition. Required for DNA damage lesion repair in stationary-phase cells. The protein is G/U mismatch-specific DNA glycosylase of Escherichia coli (strain SMS-3-5 / SECEC).